The chain runs to 642 residues: Kelch-like protein 17 (642 aa).

Residues 1-53 form a disordered region; it reads MQPRSERPAGRTQSPEHGSPGPGPEAPPPPPPQPPAPEAERTRPRQARPAAPM. The segment covering 21 to 37 has biased composition (pro residues); sequence GPGPEAPPPPPPQPPAP. The BTB domain maps to 92-159; the sequence is CDIVLHVAAK…AYTAEIVVGE (68 aa). Positions 194–296 constitute a BACK domain; it reads CLGIRGFADA…SRDFLLGHVD (103 aa). The tract at residues 289-641 is interaction with F-actin; it reads DFLLGHVDAE…SPTLSVSSTS (353 aa). Kelch repeat units follow at residues 343-389, 390-436, 438-483, 484-530, 532-577, and 578-624; these read VLFA…AVGN, RLYA…ALHG, LYSA…TLDG, NLYA…VLEG, LYVA…AMDG, and WLYA…VLEL. Positions 640-642 are interaction with PDZK1; sequence TSL.

In terms of assembly, interacts with F-actin; the interaction disrupts the F-actin structures and leads to marked changes of neuronal morphology. Component of a complex, composed of PDZK1, SYNGAP1, KLHL17 and NMDA receptors. Interacts directly with PDZK1 (via PDZ1 domain); the interaction is important for integrity of actin cytoskeleton structures in neurons. Interacts with DLG4 and SYNGAP1. Interacts (via kelch repeats) with GRIK2 (via C-terminus); the interaction targets GRIK2 for degradation via ubiquitin-proteasome pathway. Interacts with GRIK1. Interacts with (via BTB domain) CUL3; the interaction regulates surface GRIK2 expression.

The protein localises to the postsynaptic density. Its subcellular location is the synapse. It participates in protein modification; protein ubiquitination. Substrate-recognition component of some cullin-RING-based BCR (BTB-CUL3-RBX1) E3 ubiquitin-protein ligase complexes. The BCR(KLHL17) complex mediates the ubiquitination and subsequent degradation of GLUR6. May play a role in the actin-based neuronal function. The chain is Kelch-like protein 17 (KLHL17) from Homo sapiens (Human).